The primary structure comprises 94 residues: Large ribosomal subunit protein bL27 (94 aa).

The tract at residues 1-25 is disordered; sequence MAHKKGTGSTRNGRDSQSKRLGVKR.

The protein belongs to the bacterial ribosomal protein bL27 family.

The polypeptide is Large ribosomal subunit protein bL27 (Gloeothece citriformis (strain PCC 7424) (Cyanothece sp. (strain PCC 7424))).